A 432-amino-acid polypeptide reads, in one-letter code: Alcohol acyltransferase 9 (432 aa).

Catalysis depends on proton acceptor residues histidine 156 and aspartate 379.

This sequence belongs to the plant acyltransferase family. Expressed in fruit.

The catalysed reaction is 2-(methylsulfanyl)acetyl-CoA + butan-1-ol = butyl 2-(methylsulfanyl)acetate + CoA. It carries out the reaction ethanol + acetyl-CoA = ethyl acetate + CoA. The enzyme catalyses butan-1-ol + acetyl-CoA = butyl acetate + CoA. It catalyses the reaction butan-1-ol + propanoyl-CoA = butyl propanoate + CoA. In terms of biological role, involved in the biosynthesis of volatile esters which confer kiwifruit flavor. Alcohol acyl transferase that can use a wide range of alcohols as substrate to produce esters. Exhibits acetyl-CoA:alcohol O-acyltransferase activity. The protein is Alcohol acyltransferase 9 of Actinidia deliciosa (Kiwi).